The sequence spans 489 residues: UDP-glycosyltransferase 85A1 (489 aa).

Residues S307, 364-366 (CPQ), 381-389 (HCGWNSILE), and 403-406 (FADQ) each bind UDP-alpha-D-glucose.

Belongs to the UDP-glycosyltransferase family. Expressed in root tips, lateral root initials, root apex, shoots, leaf periphery, leaf primordia and flowers.

Functionally, involved in the O-glucosylation of trans-zeatin and dihydrozeatin. Also active in vitro on cis-zeatin. Not active on N-glucosylated substrates. The protein is UDP-glycosyltransferase 85A1 (UGT85A1) of Arabidopsis thaliana (Mouse-ear cress).